The sequence spans 208 residues: Small ribosomal subunit protein uS4 (208 aa).

The region spanning 98-161 (RRLDNVIYRL…RKIPVLAEAQ (64 aa)) is the S4 RNA-binding domain.

It belongs to the universal ribosomal protein uS4 family. As to quaternary structure, part of the 30S ribosomal subunit. Contacts protein S5. The interaction surface between S4 and S5 is involved in control of translational fidelity.

Its function is as follows. One of the primary rRNA binding proteins, it binds directly to 16S rRNA where it nucleates assembly of the body of the 30S subunit. With S5 and S12 plays an important role in translational accuracy. This Nitratidesulfovibrio vulgaris (strain ATCC 29579 / DSM 644 / CCUG 34227 / NCIMB 8303 / VKM B-1760 / Hildenborough) (Desulfovibrio vulgaris) protein is Small ribosomal subunit protein uS4.